Consider the following 133-residue polypeptide: ATP synthase epsilon chain (133 aa).

This sequence belongs to the ATPase epsilon chain family. In terms of assembly, F-type ATPases have 2 components, CF(1) - the catalytic core - and CF(0) - the membrane proton channel. CF(1) has five subunits: alpha(3), beta(3), gamma(1), delta(1), epsilon(1). CF(0) has three main subunits: a, b and c.

It is found in the cell membrane. Functionally, produces ATP from ADP in the presence of a proton gradient across the membrane. The polypeptide is ATP synthase epsilon chain (Clostridium botulinum (strain ATCC 19397 / Type A)).